A 210-amino-acid chain; its full sequence is Glycerol-3-phosphate acyltransferase (210 aa).

5 consecutive transmembrane segments (helical) span residues 4-24, 52-72, 82-102, 118-138, and 159-179; these read LIVA…IVSA, AAIL…WLTG, DTSV…PVFF, LAIN…VAFF, and FLFG…LLIW.

This sequence belongs to the PlsY family. As to quaternary structure, probably interacts with PlsX.

The protein resides in the cell inner membrane. The enzyme catalyses an acyl phosphate + sn-glycerol 3-phosphate = a 1-acyl-sn-glycero-3-phosphate + phosphate. It participates in lipid metabolism; phospholipid metabolism. Catalyzes the transfer of an acyl group from acyl-phosphate (acyl-PO(4)) to glycerol-3-phosphate (G3P) to form lysophosphatidic acid (LPA). This enzyme utilizes acyl-phosphate as fatty acyl donor, but not acyl-CoA or acyl-ACP. The polypeptide is Glycerol-3-phosphate acyltransferase (Paraburkholderia phymatum (strain DSM 17167 / CIP 108236 / LMG 21445 / STM815) (Burkholderia phymatum)).